Here is a 466-residue protein sequence, read N- to C-terminus: MAAPRTSTRKFLGRLSLPERNFVAEALRTETVGGVLLLLAAITALIWANVPALHHSYESVSHFHFGPAPLGLDLSVQHWAADGLLAVFFFVAGIELKRELVAGDLKDPKAAALPVAAALCGMAVPALVYTLTNLTGGGSLRGWAVPTATDIAFALAVLAVIGTSLPSALRAFLLTLAVVDDLFAILIIAVFFTADLNFAALAGAVIGLAVFWLLLRKGVRGWYVYVPLALVIWGLMYNSGIHATIAGVAMGLMLRCHRHQGEEHAPGEHIEHLVRPLSAGLAVPLFALFSAGVVISGGALGDVFTRPETLGVVLGLVVGKAIGIFGGTWLTARFTRASLSDDLAWPDVFAVASLAGIGFTVSLLIGELAFDGDPVLTDEVKAAVLTGSLLAALIATTLLKLRNAKYRALCEDEERDEDSDGIPDIYEQDNPAYHLRMAEIYERKAAEHRRLAEVTGGAGAENDGPA.

11 consecutive transmembrane segments (helical) span residues 32-52 (VGGVLLLLAAITALIWANVPA), 74-94 (LSVQHWAADGLLAVFFFVAGI), 111-131 (AALPVAAALCGMAVPALVYTL), 142-162 (GWAVPTATDIAFALAVLAVIG), 172-192 (FLLTLAVVDDLFAILIIAVFF), 195-215 (DLNFAALAGAVIGLAVFWLLL), 221-241 (GWYVYVPLALVIWGLMYNSGI), 280-300 (GLAVPLFALFSAGVVISGGAL), 310-330 (LGVVLGLVVGKAIGIFGGTWL), 348-368 (VFAVASLAGIGFTVSLLIGEL), and 379-399 (EVKAAVLTGSLLAALIATTLL).

The protein belongs to the NhaA Na(+)/H(+) (TC 2.A.33) antiporter family.

The protein resides in the cell membrane. The catalysed reaction is Na(+)(in) + 2 H(+)(out) = Na(+)(out) + 2 H(+)(in). In terms of biological role, na(+)/H(+) antiporter that extrudes sodium in exchange for external protons. In Streptomyces avermitilis (strain ATCC 31267 / DSM 46492 / JCM 5070 / NBRC 14893 / NCIMB 12804 / NRRL 8165 / MA-4680), this protein is Na(+)/H(+) antiporter NhaA.